The chain runs to 193 residues: CASP-like protein 1E1 (193 aa).

Topologically, residues 1 to 30 (MESQNKASLPVMDGLERRVVASQSEGASTC) are cytoplasmic. A helical membrane pass occupies residues 31–51 (DLLLRVLALVLTLAAAIVLGV). The Extracellular segment spans residues 52–86 (DKQTKVVPIKIVDTLPAINLPVSAKWHYLSAFTYS). A helical membrane pass occupies residues 87 to 107 (VASNAIACSYAALSLVLAVSG). The Cytoplasmic segment spans residues 108–113 (KKGIMS). Residues 114–134 (IVIVLDLLMVAMLFSSNGAAL) traverse the membrane as a helical segment. The Extracellular segment spans residues 135–162 (AIGLMGYQGNSHVRWTKVCHVFGRFCNQ). The chain crosses the membrane as a helical span at residues 163 to 183 (VAVSISLSLLGSILFLLLVGI). Residues 184 to 193 (TSLRLHKKSK) are Cytoplasmic-facing.

The protein belongs to the Casparian strip membrane proteins (CASP) family. In terms of assembly, homodimer and heterodimers.

The protein resides in the cell membrane. The polypeptide is CASP-like protein 1E1 (Populus trichocarpa (Western balsam poplar)).